Here is a 359-residue protein sequence, read N- to C-terminus: Guanine nucleotide-binding protein subunit alpha-11 (359 aa).

2 S-palmitoyl cysteine lipidation sites follow: Cys9 and Cys10. Residues 38 to 359 enclose the G-alpha domain; it reads RELKLLLLGT…QLNLKEYNLV (322 aa). The interval 41-54 is G1 motif; sequence KLLLLGTGESGKST. Residues 46–53 and 180–183 each bind GTP; these read GTGESGKS and LRVR. Ser53 is a binding site for Mg(2+). Residues 178–186 are G2 motif; it reads DVLRVRVPT. Mg(2+) is bound at residue Thr186. Positions 201-210 are G3 motif; the sequence is FRMVDVGGQR. The G4 motif stretch occupies residues 270 to 277; that stretch reads ILFLNKKD. Residues 274–277 and Ala331 each bind GTP; that span reads NKKD. Residues 329–334 are G5 motif; the sequence is TCATDT.

This sequence belongs to the G-alpha family. G(q) subfamily. As to quaternary structure, g proteins are composed of 3 units; alpha, beta and gamma. The alpha chain contains the guanine nucleotide binding site. Interacts with RGS22. Interacts with NTSR1.

The protein localises to the cell membrane. Its subcellular location is the cytoplasm. The catalysed reaction is GTP + H2O = GDP + phosphate + H(+). In terms of biological role, guanine nucleotide-binding proteins (G proteins) function as transducers downstream of G protein-coupled receptors (GPCRs) in numerous signaling cascades. The alpha chain contains the guanine nucleotide binding site and alternates between an active, GTP-bound state and an inactive, GDP-bound state. Signaling by an activated GPCR promotes GDP release and GTP binding. The alpha subunit has a low GTPase activity that converts bound GTP to GDP, thereby terminating the signal. Both GDP release and GTP hydrolysis are modulated by numerous regulatory proteins. Signaling is mediated via phospholipase C-beta-dependent inositol lipid hydrolysis for signal propagation: activates phospholipase C-beta: following GPCR activation, GNA11 activates PLC-beta (PLCB1, PLCB2, PLCB3 or PLCB4), leading to production of diacylglycerol (DAG) and inositol 1,4,5-trisphosphate (IP3). Transduces FFAR4 signaling in response to long-chain fatty acids (LCFAs). Together with GNAQ, required for heart development. In the respiratory epithelium, transmits OXGR1-dependent signals that lead to downstream intracellular Ca(2+) release and mucocilliary clearance of airborne pathogens. This Bos taurus (Bovine) protein is Guanine nucleotide-binding protein subunit alpha-11 (GNA11).